A 98-amino-acid chain; its full sequence is MAKSKFRPLHDRVVVRRVESESKTAGGIIIPDTAKEKPQEGEIIAVGSGARDESGKLVPLDVKAGDRILFGKWSGTEVKLNGEDLLIMKESDIMGIIG.

It belongs to the GroES chaperonin family. Heptamer of 7 subunits arranged in a ring. Interacts with the chaperonin GroEL.

The protein localises to the cytoplasm. In terms of biological role, together with the chaperonin GroEL, plays an essential role in assisting protein folding. The GroEL-GroES system forms a nano-cage that allows encapsulation of the non-native substrate proteins and provides a physical environment optimized to promote and accelerate protein folding. GroES binds to the apical surface of the GroEL ring, thereby capping the opening of the GroEL channel. This is Co-chaperonin GroES 4 from Mesorhizobium japonicum (strain LMG 29417 / CECT 9101 / MAFF 303099) (Mesorhizobium loti (strain MAFF 303099)).